We begin with the raw amino-acid sequence, 296 residues long: DNA-3-methyladenine glycosylase (296 aa).

Ser-110 is modified (phosphoserine). Residue Asp-209 is the Proton acceptor of the active site.

The protein belongs to the alkylbase DNA glycosidase AlkA family.

It localises to the nucleus. It catalyses the reaction Hydrolysis of alkylated DNA, releasing 3-methyladenine, 3-methylguanine, 7-methylguanine and 7-methyladenine.. Functionally, hydrolysis of the deoxyribose N-glycosidic bond to excise 3-methyladenine or 7-methyladenine from the damaged DNA polymer formed by alkylation lesions. The polypeptide is DNA-3-methyladenine glycosylase (MAG1) (Saccharomyces cerevisiae (strain ATCC 204508 / S288c) (Baker's yeast)).